The chain runs to 270 residues: 5'-AMP-activated protein kinase subunit beta-1 (270 aa).

The segment at 1–43 (MGNTSSERAALERQAGHKTPRRDSSGGTKDGDRPKILMDSPED) is disordered. Residue Gly2 is the site of N-myristoyl glycine attachment. At Thr4 the chain carries Phosphothreonine. Phosphoserine occurs at positions 5 and 6. Over residues 9–36 (AALERQAGHKTPRRDSSGGTKDGDRPKI) the composition is skewed to basic and acidic residues. Thr19 carries the phosphothreonine modification. Ser24 and Ser25 each carry phosphoserine; by autocatalysis. Phosphoserine occurs at positions 40, 96, and 101. The segment at 68-163 (EVNEKAPAQA…QVKKTDFEVF (96 aa)) is glycogen-binding domain. The residue at position 108 (Ser108) is a Phosphoserine; by autocatalysis. Thr148 carries the post-translational modification Phosphothreonine. Ser182 carries the post-translational modification Phosphoserine. Lys201 is subject to N6-succinyllysine.

It belongs to the 5'-AMP-activated protein kinase beta subunit family. As to quaternary structure, AMPK is a heterotrimer of an alpha catalytic subunit (PRKAA1 or PRKAA2), a beta (PRKAB1 or PRKAB2) and a gamma non-catalytic subunits (PRKAG1, PRKAG2 or PRKAG3). Interacts with FNIP1 and FNIP2. Phosphorylated when associated with the catalytic subunit (PRKAA1 or PRKAA2). Phosphorylated by ULK1; leading to negatively regulate AMPK activity and suggesting the existence of a regulatory feedback loop between ULK1 and AMPK. Highly expressed in kidney, heart, white adipose tissue, lung and spleen.

Functionally, non-catalytic subunit of AMP-activated protein kinase (AMPK), an energy sensor protein kinase that plays a key role in regulating cellular energy metabolism. In response to reduction of intracellular ATP levels, AMPK activates energy-producing pathways and inhibits energy-consuming processes: inhibits protein, carbohydrate and lipid biosynthesis, as well as cell growth and proliferation. AMPK acts via direct phosphorylation of metabolic enzymes, and by longer-term effects via phosphorylation of transcription regulators. Also acts as a regulator of cellular polarity by remodeling the actin cytoskeleton; probably by indirectly activating myosin. Beta non-catalytic subunit acts as a scaffold on which the AMPK complex assembles, via its C-terminus that bridges alpha (PRKAA1 or PRKAA2) and gamma subunits (PRKAG1, PRKAG2 or PRKAG3). The sequence is that of 5'-AMP-activated protein kinase subunit beta-1 (Prkab1) from Rattus norvegicus (Rat).